The following is a 430-amino-acid chain: Probable aspartic-type endopeptidase TRV_06366 (430 aa).

The first 17 residues, 1 to 17, serve as a signal peptide directing secretion; the sequence is MHVSTLLVAVLLPLALS. Positions 18–87 are cleaved as a propeptide — activation peptide; sequence KPTPRKKTSS…SKATAGSGKE (70 aa). The segment at 61-104 is disordered; sequence HEMEGYHPQPISKLPGNSKATAGSGKEGVESQDEKGEVVNNPTD. The segment covering 87 to 104 has biased composition (basic and acidic residues); the sequence is EGVESQDEKGEVVNNPTD. The 319-residue stretch at 109 to 427 folds into the Peptidase A1 domain; the sequence is FLSPVTIGGQ…DQRGPSISLA (319 aa). The active site involves Asp125. A glycan (N-linked (GlcNAc...) asparagine) is linked at Asn306. Residue Asp314 is part of the active site.

It belongs to the peptidase A1 family.

Its subcellular location is the secreted. Probable secreted aspartic-type endopeptidase which contributes to virulence. In Trichophyton verrucosum (strain HKI 0517), this protein is Probable aspartic-type endopeptidase TRV_06366.